Consider the following 367-residue polypeptide: uncharacterized protein (367 aa).

Residues 333 to 367 (RERRPTLNAQRAHAAAQQQPRRRNRRQQGTGASAS) form a disordered region. Residues 341–351 (AQRAHAAAQQQ) show a composition bias toward low complexity.

This is an uncharacterized protein from Amazona oratrix (yellow-headed parrot).